The chain runs to 323 residues: Phosphatidylethanolamine:ceramide ethanolaminephosphotransferase (323 aa).

Residues 1–26 (MAVPPVEMYSGSFWNRMRKPLPLRTQ) are Cytoplasmic-facing. A helical transmembrane segment spans residues 27-47 (VIRFTVVFVIVSFILVVALQI). Residues 48-74 (THERMPDPKVTKPLPDLGFELLTKVPG) are Extracellular-facing. A helical membrane pass occupies residues 75-95 (MYVLADCCIGFLNILSVFTAF). The Cytoplasmic portion of the chain corresponds to 96-147 (KLYLLHRHCVGSGEPELPCNIPGVSRFFLSVWLCKENCRIELRNIHTIAWIR). Residues 148-168 (FITSYALLLLSRSIIMVVTSL) form a helical membrane-spanning segment. The Extracellular segment spans residues 169-187 (PNPDDLCQNPPKIENRVKD). Residues 188–208 (ILLTVLTAGAGSIHCGDLMYS) traverse the membrane as a helical segment. The Cytoplasmic portion of the chain corresponds to 209-233 (GHTVILTLHLMFHWIYGAMVHWSFR). A helical transmembrane segment spans residues 234 to 254 (PVVTVVAIFGYYCIVASRFHY). Residues 255–257 (TDD) are Extracellular-facing. A helical transmembrane segment spans residues 258–278 (VLVAIYLTIATFIAVGHNADG). Residues 279–323 (APWQLQLFIRWWPCCGANSREVAEDGVPVAIVIKNEEMMNFEGKS) lie on the Cytoplasmic side of the membrane.

The protein belongs to the sphingomyelin synthase family.

The protein resides in the membrane. It carries out the reaction an N-acylsphing-4-enine + a 1,2-diacyl-sn-glycero-3-phosphoethanolamine = an N-acylsphing-4-enine 1-phosphoethanolamine + a 1,2-diacyl-sn-glycerol. It catalyses the reaction an N-acylsphinganine + a 1,2-diacyl-sn-glycero-3-phosphoethanolamine = an N-acylsphinganine-1-phosphoethanolamine + a 1,2-diacyl-sn-glycerol. In terms of biological role, predominantly synthesizes ethanolamine-phosphorylceramide (EPC), with minimal sphingomyelin (SM)/inositol phosphorylceramide (IPC) synthase activity. Specificity is likely to be defined by residues in the lumenal catalytic domain that interact with the polar head groups of the phospholipid donors. EPC is synthesized by both stages of the parasite life cycle, bloodstream forms (BSF) and procyclic forms (PCF), by transferring the phosphoethanolamine from a 1,2-diacyl-sn-glycero-3-phosphoethanolamine to an N-acylsphing-4-enine (ceramide) or an N-acylsphinganine (dihydroceramide). Similarly, SM is synthesized by transferring the phosphocholine from a 1,2-diacyl-sn-glycero-3-phosphocholine to ceramide or dihydroceramide by BSF and PCF, while IPC is confined to PCF. The ceramide/dihydroceramide ratios are skewed towards dihydroceramide in PCF parasites and ceramide in BSF parasites, this is likely due to differential expression and/or regulation of dihydroceramide desaturase, the enzyme responsible for converting dihydroceramide to ceramide. In Trypanosoma brucei brucei, this protein is Phosphatidylethanolamine:ceramide ethanolaminephosphotransferase.